The following is a 507-amino-acid chain: Transmembrane protein 184 homolog DDB_G0276041 (507 aa).

Transmembrane regions (helical) follow at residues 13 to 33, 50 to 70, 88 to 108, 141 to 161, 179 to 199, 222 to 242, and 260 to 280; these read IVMLSIGSFFALGSIIIAVIL, IVRIIMIAPIYAIHSLLSLFF, AYVLYCFFKLLICFLGGEEAL, LGLVLQYAIIKPTLAIVAAIL, LWITVINNISVLIALYFLVMF, VVFFLFWQTVVITVLIWFDAL, and FLVCIEMFITSIAMGICFSYS. 6 N-linked (GlcNAc...) asparagine glycosylation sites follow: Asn360, Asn375, Asn470, Asn473, Asn477, and Asn498. Residues 448 to 500 form a disordered region; the sequence is NGASNNNNNNNNNNNNINNNNNNNSNNSNNNSNSQFESIDINSNSVNSNKNQS. The segment covering 451-500 has biased composition (low complexity); sequence SNNNNNNNNNNNNINNNNNNNSNNSNNNSNSQFESIDINSNSVNSNKNQS.

The protein belongs to the TMEM184 family.

Its subcellular location is the cell membrane. Its function is as follows. Probable transporter. The chain is Transmembrane protein 184 homolog DDB_G0276041 (tmem184B) from Dictyostelium discoideum (Social amoeba).